Here is a 308-residue protein sequence, read N- to C-terminus: Protein translocase subunit SecF (308 aa).

A run of 6 helical transmembrane segments spans residues 28-48, 140-160, 164-184, 194-214, 246-266, and 272-292; these read SIILSLISFIWIGIYKFNFGI, IEAGAMAMLFSFLAIMVYIWV, WYFGLGILIALVHDVILALGF, LSTIAAVLTIIGYSVNDSVVI, ILTVITTLLANLALILFGGEA, and VLVFFGIIAGTYSSIFISAPI.

The protein belongs to the SecD/SecF family. SecF subfamily. As to quaternary structure, forms a complex with SecD. Part of the essential Sec protein translocation apparatus which comprises SecA, SecYEG and auxiliary proteins SecDF-YajC and YidC.

It is found in the cell inner membrane. Part of the Sec protein translocase complex. Interacts with the SecYEG preprotein conducting channel. SecDF uses the proton motive force (PMF) to complete protein translocation after the ATP-dependent function of SecA. This chain is Protein translocase subunit SecF, found in Rickettsia conorii (strain ATCC VR-613 / Malish 7).